The primary structure comprises 100 residues: Large ribosomal subunit protein uL23c (100 aa).

This sequence belongs to the universal ribosomal protein uL23 family. As to quaternary structure, part of the 50S ribosomal subunit.

Its subcellular location is the plastid. It localises to the chloroplast. Binds to 23S rRNA. This chain is Large ribosomal subunit protein uL23c (rpl23), found in Euglena gracilis.